A 312-amino-acid polypeptide reads, in one-letter code: Acetylglutamate kinase (312 aa).

Substrate is bound by residues 76 to 77 (GG), R98, and N199.

It belongs to the acetylglutamate kinase family. ArgB subfamily.

Its subcellular location is the cytoplasm. The enzyme catalyses N-acetyl-L-glutamate + ATP = N-acetyl-L-glutamyl 5-phosphate + ADP. Its pathway is amino-acid biosynthesis; L-arginine biosynthesis; N(2)-acetyl-L-ornithine from L-glutamate: step 2/4. In terms of biological role, catalyzes the ATP-dependent phosphorylation of N-acetyl-L-glutamate. This Beutenbergia cavernae (strain ATCC BAA-8 / DSM 12333 / CCUG 43141 / JCM 11478 / NBRC 16432 / NCIMB 13614 / HKI 0122) protein is Acetylglutamate kinase.